The primary structure comprises 250 residues: 2,3-bisphosphoglycerate-dependent phosphoglycerate mutase (250 aa).

Residues 10 to 17, 23 to 24, arginine 62, 89 to 92, lysine 100, 116 to 117, and 185 to 186 contribute to the substrate site; these read RHGESQWN, TG, ERHY, RR, and GN. The active-site Tele-phosphohistidine intermediate is the histidine 11. The Proton donor/acceptor role is filled by glutamate 89.

This sequence belongs to the phosphoglycerate mutase family. BPG-dependent PGAM subfamily. As to quaternary structure, homodimer.

The catalysed reaction is (2R)-2-phosphoglycerate = (2R)-3-phosphoglycerate. It functions in the pathway carbohydrate degradation; glycolysis; pyruvate from D-glyceraldehyde 3-phosphate: step 3/5. Functionally, catalyzes the interconversion of 2-phosphoglycerate and 3-phosphoglycerate. The sequence is that of 2,3-bisphosphoglycerate-dependent phosphoglycerate mutase from Shigella boydii serotype 4 (strain Sb227).